A 539-amino-acid chain; its full sequence is Probable protein kinase UbiB (539 aa).

A helical membrane pass occupies residues 23-43 (DLLFALPLPWWMLALRFVLPW). The Protein kinase domain occupies 125 to 492 (RFDEKPLASA…WHDRKDEPVL (368 aa)). ATP-binding positions include 131–139 (LASASVAQV) and Lys-153. Asp-288 serves as the catalytic Proton acceptor. 2 consecutive transmembrane segments (helical) span residues 494 to 514 (LIGAALLVGGAIQGWVMSEAA) and 517 to 537 (LLTLTAWPAAIMLIAGLYLIV).

It belongs to the ABC1 family. UbiB subfamily.

The protein resides in the cell inner membrane. It participates in cofactor biosynthesis; ubiquinone biosynthesis [regulation]. Is probably a protein kinase regulator of UbiI activity which is involved in aerobic coenzyme Q (ubiquinone) biosynthesis. In Pseudomonas syringae pv. syringae (strain B728a), this protein is Probable protein kinase UbiB.